The sequence spans 275 residues: MSVLINEKLHSRRLKWRWPLSRQVTLSIGTLAVLLTVWWTVATLQLISPLFLPPPQQVLEKLLTIAGPQGFMDATLWQHLAASLTRIMLALFAAVLFGIPVGIAMGLSPTVRGILDPIIELYRPVPPLAYLPLMVIWFGIGETSKILLIYLAIFAPVAMSALAGVKSVQQVRIRAAQSLGASRAQVLWFVILPGALPEILTGLRIGLGVGWSTLVAAELIAATRGLGFMVQSAGEFLATDVVLAGIAVIAIIAFLLELGLRALQRRLTPWHGEVQ.

7 consecutive transmembrane segments (helical) span residues 20–42, 87–107, 124–144, 146–166, 186–206, 209–229, and 236–256; these read LSRQ…WTVA, IMLA…AMGL, PVPP…GETS, ILLI…AGVK, VLWF…LRIG, VGWS…LGFM, and FLAT…AFLL. In terms of domain architecture, ABC transmembrane type-1 spans 80-264; sequence LAASLTRIML…LLELGLRALQ (185 aa).

It belongs to the binding-protein-dependent transport system permease family. CysTW subfamily.

The protein localises to the cell inner membrane. Functionally, part of a binding-protein-dependent transport system for taurine. Probably responsible for the translocation of the substrate across the membrane. In Escherichia coli (strain K12), this protein is Taurine transport system permease protein TauC (tauC).